Here is a 73-residue protein sequence, read N- to C-terminus: Nodulin-1 (73 aa).

Positions 1–23 (MERKTLASLCFFLIVLLAAQVVA) are cleaved as a signal peptide. 3 cysteine pairs are disulfide-bonded: cysteine 39–cysteine 64, cysteine 49–cysteine 71, and cysteine 53–cysteine 73.

As to expression, expressed in nodules, but not in leaves, stems, flowers and roots. In developing nodules, expressed close to the infection threads.

The protein resides in the secreted. Its function is as follows. Nodulation-related protein probably involved in the infection process. In Medicago truncatula (Barrel medic), this protein is Nodulin-1 (N1).